The primary structure comprises 143 residues: Large ribosomal subunit protein bL17 (143 aa).

Belongs to the bacterial ribosomal protein bL17 family. Part of the 50S ribosomal subunit. Contacts protein L32.

In Bartonella quintana (strain Toulouse) (Rochalimaea quintana), this protein is Large ribosomal subunit protein bL17.